The primary structure comprises 293 residues: Histone H3-like centromeric protein CSE4 (293 aa).

Residues 132-141 (QDLSYDESDY) are compositionally biased toward acidic residues. Residues 132 to 169 (QDLSYDESDYSDPLQEIDSNYRESPRRTTDKILKSSSK) form a disordered region. Residues 150-164 (SNYRESPRRTTDKIL) show a composition bias toward basic and acidic residues. The segment at 157 to 291 (RRTTDKILKS…VQLARRIRGQ (135 aa)) is H3-like.

It belongs to the histone H3 family. In terms of assembly, component of centromeric nucleosomes, where DNA is wrapped around a histone octamer core. The octamer contains two molecules each of H2A, H2B, CSE4/CENPA and H4 assembled in one CSE4-H4 heterotetramer and two H2A-H2B heterodimers. Interacts with the inner kinetochore. In terms of processing, ubiquitinated. Is degraded through ubiquitin-mediated proteolysis when not protected by its association to the kinetochore.

It localises to the nucleus. It is found in the chromosome. The protein localises to the centromere. In terms of biological role, histone H3-like nucleosomal protein that is specifically found in centromeric nucleosomes. Replaces conventional H3 in the nucleosome core of centromeric chromatin that serves as an assembly site for the inner kinetochore. Required for recruitment and assembly of kinetochore proteins, mitotic progression and chromosome segregation. May serve as an epigenetic mark that propagates centromere identity through replication and cell division. In Monosporozyma servazzii (Yeast), this protein is Histone H3-like centromeric protein CSE4 (CSE4).